The following is a 101-amino-acid chain: MLVFVHAVLVTALILLLIGRIQLLERLLLSHLLNLTTVSNVLGVPDSSLRVNCLQLLKPDCLDFNILHKVLAETRLLVVVLRVIFLVLLGFSCYTLLGALF.

Residues 1–43 (MLVFVHAVLVTALILLLIGRIQLLERLLLSHLLNLTTVSNVLG) form the signal peptide. A helical transmembrane segment spans residues 76 to 96 (LLVVVLRVIFLVLLGFSCYTL).

This sequence belongs to the coronaviruses ns7/ns7a protein family.

Its subcellular location is the host membrane. May function in the formation of membrane-bound replication complexes or in the assembly of the virus. This chain is Non-structural protein 7a, found in Felidae (cat family).